The chain runs to 148 residues: Aspartate carbamoyltransferase regulatory chain (148 aa).

The Zn(2+) site is built by cysteine 106, cysteine 111, cysteine 134, and cysteine 137.

This sequence belongs to the PyrI family. In terms of assembly, contains catalytic and regulatory chains. It depends on Zn(2+) as a cofactor.

Involved in allosteric regulation of aspartate carbamoyltransferase. This chain is Aspartate carbamoyltransferase regulatory chain, found in Methanococcus vannielii (strain ATCC 35089 / DSM 1224 / JCM 13029 / OCM 148 / SB).